The sequence spans 642 residues: Assimilatory sulfite reductase (ferredoxin), chloroplastic (642 aa).

The N-terminal 61 residues, 1–61, are a transit peptide targeting the chloroplast; sequence MSSTFRAPAG…SSSSSSPIQA (61 aa). The tract at residues 46–74 is disordered; the sequence is PVPPSASSSSSSPIQAVSTPAKPETATKR. Positions 503, 509, 549, and 553 each coordinate [4Fe-4S] cluster. C553 serves as a coordination point for siroheme.

It belongs to the nitrite and sulfite reductase 4Fe-4S domain family. In terms of assembly, monomer. Interacts with ferredoxin. Requires siroheme as cofactor. [4Fe-4S] cluster is required as a cofactor. Phosphorylated; this phosphorylation reduces DNA-binding. As to expression, present in leaves and roots.

The protein localises to the plastid. It localises to the chloroplast stroma. Its subcellular location is the chloroplast nucleoid. It is found in the plastid stroma. The enzyme catalyses hydrogen sulfide + 6 oxidized [2Fe-2S]-[ferredoxin] + 3 H2O = sulfite + 6 reduced [2Fe-2S]-[ferredoxin] + 7 H(+). Its function is as follows. Essential protein with sulfite reductase activity required in assimilatory sulfate reduction pathway during both primary and secondary metabolism and thus involved in development and growth. DNA-binding protein that binds to both double-stranded and single-stranded DNA without significant sequence specificity to reversibly repress the transcriptional activity of chloroplast nucleoids by promoting DNA compaction and possibly regulate DNA replication. This Arabidopsis thaliana (Mouse-ear cress) protein is Assimilatory sulfite reductase (ferredoxin), chloroplastic (SIR).